The primary structure comprises 462 residues: tRNA modification GTPase MnmE (462 aa).

The (6S)-5-formyl-5,6,7,8-tetrahydrofolate site is built by R34, E92, and K131. Residues 227-386 (GLQVVIAGKP…LIDAITAHAG (160 aa)) enclose the TrmE-type G domain. Residue N237 coordinates K(+). Residues 237–242 (NAGKSS), 256–262 (TDIAGTT), and 281–284 (DTAG) contribute to the GTP site. S241 serves as a coordination point for Mg(2+). 3 residues coordinate K(+): T256, I258, and T261. T262 is a binding site for Mg(2+). Position 462 (K462) interacts with (6S)-5-formyl-5,6,7,8-tetrahydrofolate.

This sequence belongs to the TRAFAC class TrmE-Era-EngA-EngB-Septin-like GTPase superfamily. TrmE GTPase family. As to quaternary structure, homodimer. Heterotetramer of two MnmE and two MnmG subunits. K(+) is required as a cofactor.

Its subcellular location is the cytoplasm. Its function is as follows. Exhibits a very high intrinsic GTPase hydrolysis rate. Involved in the addition of a carboxymethylaminomethyl (cmnm) group at the wobble position (U34) of certain tRNAs, forming tRNA-cmnm(5)s(2)U34. The protein is tRNA modification GTPase MnmE of Acinetobacter baylyi (strain ATCC 33305 / BD413 / ADP1).